Consider the following 889-residue polypeptide: Alanine--tRNA ligase (889 aa).

Zn(2+) is bound by residues H566, H570, C683, and H687.

It belongs to the class-II aminoacyl-tRNA synthetase family. Zn(2+) serves as cofactor.

The protein resides in the cytoplasm. It catalyses the reaction tRNA(Ala) + L-alanine + ATP = L-alanyl-tRNA(Ala) + AMP + diphosphate. In terms of biological role, catalyzes the attachment of alanine to tRNA(Ala) in a two-step reaction: alanine is first activated by ATP to form Ala-AMP and then transferred to the acceptor end of tRNA(Ala). Also edits incorrectly charged Ser-tRNA(Ala) and Gly-tRNA(Ala) via its editing domain. The sequence is that of Alanine--tRNA ligase from Herpetosiphon aurantiacus (strain ATCC 23779 / DSM 785 / 114-95).